The following is an 890-amino-acid chain: Inter-alpha-trypsin inhibitor heavy chain H3 (890 aa).

Positions 1 to 20 are cleaved as a signal peptide; sequence MAFAWWPCLILALLSSLAAS. Residues 21–34 constitute a propeptide that is removed on maturation; that stretch reads GFPRSPFRLLGKRS. Positions 29-158 constitute a VIT domain; sequence LLGKRSLPEG…KVTFELTYEE (130 aa). Residue N91 is glycosylated (N-linked (GlcNAc...) asparagine). One can recognise a VWFA domain in the interval 284-467; that stretch reads NVAFVIDISG…LQLQGFYEEV (184 aa). N580 carries an N-linked (GlcNAc...) asparagine glycan. D651 carries the aspartate 1-(chondroitin 4-sulfate)-ester modification. Residues 652–890 constitute a propeptide that is removed on maturation; that stretch reads PHFIIQIPEK…HTDYIVPNLF (239 aa).

This sequence belongs to the ITIH family. I-alpha-I plasma protease inhibitors are assembled from one or two heavy chains (HC) and one light chain, bikunin. Pre-alpha-inhibitor (P-alpha-I) is composed of ITIH3/HC3 and bikunin. Heavy chains are linked to bikunin via chondroitin 4-sulfate esterified to the alpha-carboxyl of the C-terminal aspartate after propeptide cleavage.

The protein localises to the secreted. In terms of biological role, may act as a carrier of hyaluronan in serum or as a binding protein between hyaluronan and other matrix protein, including those on cell surfaces in tissues to regulate the localization, synthesis and degradation of hyaluronan which are essential to cells undergoing biological processes. The chain is Inter-alpha-trypsin inhibitor heavy chain H3 (ITIH3) from Homo sapiens (Human).